A 97-amino-acid polypeptide reads, in one-letter code: Co-chaperonin GroES (97 aa).

The protein belongs to the GroES chaperonin family. In terms of assembly, heptamer of 7 subunits arranged in a ring. Interacts with the chaperonin GroEL.

It localises to the cytoplasm. Its function is as follows. Together with the chaperonin GroEL, plays an essential role in assisting protein folding. The GroEL-GroES system forms a nano-cage that allows encapsulation of the non-native substrate proteins and provides a physical environment optimized to promote and accelerate protein folding. GroES binds to the apical surface of the GroEL ring, thereby capping the opening of the GroEL channel. The protein is Co-chaperonin GroES of Buchnera aphidicola subsp. Cinara cedri (strain Cc).